Reading from the N-terminus, the 645-residue chain is Transcription termination factor FttA (645 aa).

The interval 10–77 is KHa; that stretch reads APSNQNIMAT…IIVRIDESVR (68 aa). A KHb region spans residues 78–146; sequence KKEEDARKML…WTLRIRKATT (69 aa). Positions 187–391 are metallo-beta-lactamase N-terminus; it reads EISLTALGGF…LLIESTYGAK (205 aa). 6 residues coordinate Zn(2+): His-250, His-252, Asp-254, His-255, His-337, and Asp-360. The interval 392 to 586 is beta-Casp; sequence EDIQPTRQEV…CRMEKLDGFS (195 aa). Positions 587–645 are metallo-beta-lactamase C-terminus; the sequence is GHSDYNQLTGFVQKLRPKLRRVLVNHGERRKSENLALAVRRMFRIPAHYPQIQESIKLF. Residue His-612 participates in Zn(2+) binding.

It belongs to the metallo-beta-lactamase superfamily. RNA-metabolizing metallo-beta-lactamase-like family. FttA subfamily. As to quaternary structure, homodimer. Interacts with RNA polymerase (RNAP), interacts with the Spt4-Spt5 complex. It depends on Zn(2+) as a cofactor.

Its function is as follows. Terminates transcription on the whole genome. Termination is linked to FttA-mediated RNA cleavage and does not require NTP hydrolysis. Cleaves endonucleolytically at the RNA exit channel of RNA polymerase (RNAP); the 5'-3' exonuclease activity of this protein degrades the nascent RNA released from RNAP. In terms of biological role, terminates transcription genome-wide in M.maripaludis. Restores wild-type growth to a strain of Methanococcus maripaludis depleted for this gene at 22 degrees Celsius and prevents transcriptional read-through. Transcription termination is most effective in vivo on RNAs with more than one U4-tract in their 3'-ends. Has endonuclease activity after U-rich tracts in transcription termination sequences. This is Transcription termination factor FttA from Cenarchaeum symbiosum (strain A).